Consider the following 444-residue polypeptide: D(2) dopamine receptor (444 aa).

Topologically, residues Met1–Tyr37 are extracellular. N-linked (GlcNAc...) asparagine glycosylation is found at Asn5, Asn17, and Asn23. Residues Ala38–Ser60 traverse the membrane as a helical segment. At Arg61 to Asn70 the chain is on the cytoplasmic side. Residues Tyr71 to Tyr93 traverse the membrane as a helical segment. At Leu94–Asp108 the chain is on the extracellular side. Cysteines 107 and 182 form a disulfide. Residues Ile109–Ile130 form a helical membrane-spanning segment. The Cytoplasmic segment spans residues Asp131 to Arg151. Residues Val152–Phe172 form a helical membrane-spanning segment. The Extracellular segment spans residues Gly173–Ala188. The chain crosses the membrane as a helical span at residues Phe189–Tyr213. The tract at residues Lys211–Gln374 is interaction with PPP1R9B. Residues Ile214–Gln374 are Cytoplasmic-facing. Residues Met281–Lys332 are disordered. The chain crosses the membrane as a helical span at residues Met375–Leu396. Residues Asn397–Ser410 lie on the Extracellular side of the membrane. Cys400 and Cys402 are disulfide-bonded. Residues Ala411–Ile432 traverse the membrane as a helical segment. The Cytoplasmic segment spans residues Glu433 to Cys444. Cys444 carries the S-palmitoyl cysteine lipid modification.

Belongs to the G-protein coupled receptor 1 family. As to quaternary structure, forms homo- and heterooligomers with DRD4. The interaction with DRD4 may modulate agonist-induced downstream signaling. Interacts with CADPS and CADPS2. Interacts with GPRASP1, PPP1R9B and CLIC6. Interacts with ARRB2. Interacts with HTR2A. Interacts with DRD1. Interacts with KCNA2. In terms of processing, palmitoylated. Palmitoylation which is required for proper localization to the plasma membrane and stability of the receptor could be carried on by ZDHHC4, ZDHHC3 and ZDHHC8.

The protein resides in the cell membrane. Its subcellular location is the golgi apparatus membrane. Functionally, dopamine receptor whose activity is mediated by G proteins which inhibit adenylyl cyclase. Positively regulates postnatal regression of retinal hyaloid vessels via suppression of VEGFR2/KDR activity, downstream of OPN5. This chain is D(2) dopamine receptor (DRD2), found in Bos taurus (Bovine).